The chain runs to 338 residues: Ketol-acid reductoisomerase (NADP(+)) (338 aa).

The 181-residue stretch at 1–181 (MKVFYDKDCD…GGGRAGIIET (181 aa)) folds into the KARI N-terminal Rossmann domain. NADP(+)-binding positions include 24–27 (YGSQ), Arg-47, and Ser-52. Residue His-107 is part of the active site. An NADP(+)-binding site is contributed by Gly-133. One can recognise a KARI C-terminal knotted domain in the interval 182 to 327 (DFREETETDL…GKLRAMMPWI (146 aa)). Mg(2+)-binding residues include Asp-190, Glu-194, Glu-226, and Glu-230. Ser-251 contributes to the substrate binding site.

The protein belongs to the ketol-acid reductoisomerase family. It depends on Mg(2+) as a cofactor.

It carries out the reaction (2R)-2,3-dihydroxy-3-methylbutanoate + NADP(+) = (2S)-2-acetolactate + NADPH + H(+). It catalyses the reaction (2R,3R)-2,3-dihydroxy-3-methylpentanoate + NADP(+) = (S)-2-ethyl-2-hydroxy-3-oxobutanoate + NADPH + H(+). The protein operates within amino-acid biosynthesis; L-isoleucine biosynthesis; L-isoleucine from 2-oxobutanoate: step 2/4. It participates in amino-acid biosynthesis; L-valine biosynthesis; L-valine from pyruvate: step 2/4. Involved in the biosynthesis of branched-chain amino acids (BCAA). Catalyzes an alkyl-migration followed by a ketol-acid reduction of (S)-2-acetolactate (S2AL) to yield (R)-2,3-dihydroxy-isovalerate. In the isomerase reaction, S2AL is rearranged via a Mg-dependent methyl migration to produce 3-hydroxy-3-methyl-2-ketobutyrate (HMKB). In the reductase reaction, this 2-ketoacid undergoes a metal-dependent reduction by NADPH to yield (R)-2,3-dihydroxy-isovalerate. The chain is Ketol-acid reductoisomerase (NADP(+)) from Bordetella petrii (strain ATCC BAA-461 / DSM 12804 / CCUG 43448).